The sequence spans 313 residues: MRVILAQPRGFCAGVVRAIEIVERALQQNGAPVYVRHEIVHNRHVVENLRNKGARFVEELDEVPHGAVAIFSAHGVAQTVEQDAQARGLDVLDATCPLVTKVHVQGRQYVAAGRRLILIGHAGHPEVEGTIGQIPAEVILVQSEAEVDTLTLPADTPVAYVTQTTLSVDDTRGIIEALQRRFTDIVGPDTRDICYATQNRQAAVRELSEQVDVLLVVGATNSSNSNRLREIGTESGVPSYLVADGSEVRAEWFANARTVGLTAGASAPEEMVEDVIAALRALGPLEVATMSGREEKVEFKLPAKLTQAVAREV.

C12 is a [4Fe-4S] cluster binding site. Residues H41 and H74 each coordinate (2E)-4-hydroxy-3-methylbut-2-enyl diphosphate. Residues H41 and H74 each contribute to the dimethylallyl diphosphate site. Positions 41 and 74 each coordinate isopentenyl diphosphate. Residue C96 participates in [4Fe-4S] cluster binding. Residue H124 coordinates (2E)-4-hydroxy-3-methylbut-2-enyl diphosphate. H124 lines the dimethylallyl diphosphate pocket. Residue H124 participates in isopentenyl diphosphate binding. E126 (proton donor) is an active-site residue. T164 is a binding site for (2E)-4-hydroxy-3-methylbut-2-enyl diphosphate. C194 serves as a coordination point for [4Fe-4S] cluster. Residues S222, S223, N224, and S266 each contribute to the (2E)-4-hydroxy-3-methylbut-2-enyl diphosphate site. 4 residues coordinate dimethylallyl diphosphate: S222, S223, N224, and S266. Isopentenyl diphosphate is bound by residues S222, S223, N224, and S266.

It belongs to the IspH family. [4Fe-4S] cluster serves as cofactor.

It catalyses the reaction isopentenyl diphosphate + 2 oxidized [2Fe-2S]-[ferredoxin] + H2O = (2E)-4-hydroxy-3-methylbut-2-enyl diphosphate + 2 reduced [2Fe-2S]-[ferredoxin] + 2 H(+). It carries out the reaction dimethylallyl diphosphate + 2 oxidized [2Fe-2S]-[ferredoxin] + H2O = (2E)-4-hydroxy-3-methylbut-2-enyl diphosphate + 2 reduced [2Fe-2S]-[ferredoxin] + 2 H(+). It participates in isoprenoid biosynthesis; dimethylallyl diphosphate biosynthesis; dimethylallyl diphosphate from (2E)-4-hydroxy-3-methylbutenyl diphosphate: step 1/1. It functions in the pathway isoprenoid biosynthesis; isopentenyl diphosphate biosynthesis via DXP pathway; isopentenyl diphosphate from 1-deoxy-D-xylulose 5-phosphate: step 6/6. Functionally, catalyzes the conversion of 1-hydroxy-2-methyl-2-(E)-butenyl 4-diphosphate (HMBPP) into a mixture of isopentenyl diphosphate (IPP) and dimethylallyl diphosphate (DMAPP). Acts in the terminal step of the DOXP/MEP pathway for isoprenoid precursor biosynthesis. This is 4-hydroxy-3-methylbut-2-enyl diphosphate reductase from Burkholderia pseudomallei (strain 1026b).